We begin with the raw amino-acid sequence, 396 residues long: Protein NDRG1-A (396 aa).

A disordered region spans residues 326–396; it reads RSRTGSAASS…NSPKSMEVSC (71 aa). The span at 327 to 340 shows a compositional bias: low complexity; it reads SRTGSAASSSSQDG. 4 repeat units span residues 340 to 349, 350 to 359, 360 to 369, and 370 to 379. A 4 X 10 AA tandem repeats of G-[NS]-R-S-R-[AS]-H-T-[DGN]-[DET] region spans residues 340–379; sequence GNRSRSHTNEGSRSRSHTGDGNRSRAHTGDGNRSRSHTDT. Basic and acidic residues predominate over residues 346-377; sequence HTNEGSRSRSHTGDGNRSRAHTGDGNRSRSHT. Residues 378–390 show a composition bias toward polar residues; it reads DTNNINSDQNSPK.

Belongs to the NDRG family.

In terms of biological role, may be involved in pronephros development, after specification of the pronephros. This chain is Protein NDRG1-A (ndrg1-a), found in Xenopus laevis (African clawed frog).